Consider the following 79-residue polypeptide: DNA gyrase inhibitor YacG (79 aa).

The Zn(2+) site is built by Cys7, Cys10, Cys26, and Cys30.

This sequence belongs to the DNA gyrase inhibitor YacG family. Interacts with GyrB. Zn(2+) is required as a cofactor.

Inhibits all the catalytic activities of DNA gyrase by preventing its interaction with DNA. Acts by binding directly to the C-terminal domain of GyrB, which probably disrupts DNA binding by the gyrase. This Shewanella halifaxensis (strain HAW-EB4) protein is DNA gyrase inhibitor YacG.